The sequence spans 256 residues: F-actin-capping protein subunit beta (256 aa).

N-acetylmethionine is present on Met-1.

It belongs to the F-actin-capping protein beta subunit family. As to quaternary structure, component of the F-actin capping complex, composed of a heterodimer of an alpha and a beta subunit.

The protein localises to the cytoplasm. Its subcellular location is the cytoskeleton. Functionally, F-actin-capping proteins bind in a Ca(2+)-independent manner to the fast growing ends of actin filaments (barbed end) thereby blocking the exchange of subunits at these ends. Unlike other capping proteins (such as gelsolin and severin), these proteins do not sever actin filaments. The protein is F-actin-capping protein subunit beta of Arabidopsis thaliana (Mouse-ear cress).